A 231-amino-acid chain; its full sequence is Cuticle protein LPCP-23 (231 aa).

An N-terminal signal peptide occupies residues 1–17 (MAFKFVVFAAALAYANA). 2 consecutive repeat copies span residues 130-133 (AAPV) and 199-202 (AAPV).

Functionally, component of the cuticle of Tenebrio molitor. The polypeptide is Cuticle protein LPCP-23 (LPCP-23) (Tenebrio molitor (Yellow mealworm beetle)).